The following is a 916-amino-acid chain: Rab3 GTPase-activating protein catalytic subunit (916 aa).

The tract at residues 530–574 is disordered; sequence NSKRKSEGMVGKASSEEEEDEDDDEGEFFDCDDLTAGAGSPTKAV. Residues S543 and S544 each carry the phosphoserine modification. The span at 545 to 562 shows a compositional bias: acidic residues; sequence EEEEDEDDDEGEFFDCDD.

This sequence belongs to the Rab3-GAP catalytic subunit family. The Rab3 GTPase-activating complex is a heterodimer composed of Rab3GAP1 and Rab3-GAP.

It localises to the cytoplasm. Catalytic subunit of the Rab3 GTPase-activating (Rab3GAP) complex composed of Rab3-GAP and Rab3GAP1, which has both GTPase-activating protein (GAP) activity towards Rab3, and guanine nucleotide exchange factor (GEF) activity towards Rab18. As part of the Rab3GAP complex, required for the rapid induction and sustained expression of synaptic homeostasis at the neuromuscular junction (NMJ). Also participates in the regulation of autophagy in tissues such as larval fat cells and adult muscles. The Rab3GAP complex, acts as a GAP for Rab3 by converting active Rab3-GTP to the inactive form Rab3-GDP. At the neuromuscular junction (NMJ), forms a presynaptic signaling mechanism with Rab3 that regulates progression of synaptic homeostasis at a late stage of vesicle release. Within this mechanism Rab3-GTP acts, directly or indirectly, to inhibit the progression of synaptic homeostasis, and Rab3-GAP functions to inactivate this action of Rab3-GTP. The Rab3GAP complex, acts as a GEF for Rab18 by promoting the conversion of inactive Rab18-GDP to the active form Rab18-GTP. Regulates autophagy as part of a Rab3GAP-Rab18 module. Once Rab18 is activated by the GEF Rab3GAP complex, the Rab3GAP-Rab18 module localizes to autophagosomes, and regulates autolysosome formation and maturation together with the Rab18 interacting effector, the PI3K/Vps34 Complex I. The chain is Rab3 GTPase-activating protein catalytic subunit from Drosophila melanogaster (Fruit fly).